Reading from the N-terminus, the 74-residue chain is MGKEDVIRMEGTIIEALPNAMFRVELDNGHKVLAHVSXRMRKNFIRLVPGDRVIVELSVYDLTRGRIVYRKKPE.

In terms of domain architecture, S1-like spans 1–72; sequence MGKEDVIRME…TRGRIVYRKK (72 aa).

The protein belongs to the IF-1 family. In terms of assembly, component of the 30S ribosomal translation pre-initiation complex which assembles on the 30S ribosome in the order IF-2 and IF-3, IF-1 and N-formylmethionyl-tRNA(fMet); mRNA recruitment can occur at any time during PIC assembly.

The protein localises to the cytoplasm. Functionally, one of the essential components for the initiation of protein synthesis. Stabilizes the binding of IF-2 and IF-3 on the 30S subunit to which N-formylmethionyl-tRNA(fMet) subsequently binds. Helps modulate mRNA selection, yielding the 30S pre-initiation complex (PIC). Upon addition of the 50S ribosomal subunit IF-1, IF-2 and IF-3 are released leaving the mature 70S translation initiation complex. The sequence is that of Translation initiation factor IF-1 from Thermotoga maritima (strain ATCC 43589 / DSM 3109 / JCM 10099 / NBRC 100826 / MSB8).